Consider the following 594-residue polypeptide: NADH-quinone oxidoreductase subunit C/D (594 aa).

An NADH dehydrogenase I subunit C region spans residues 1 to 185 (MTTGSALYIP…DPFSLNLAKQ (185 aa)). Residues 209-594 (DYMFLNLGPN…IDFVMADVDR (386 aa)) are NADH dehydrogenase I subunit D.

It in the N-terminal section; belongs to the complex I 30 kDa subunit family. The protein in the C-terminal section; belongs to the complex I 49 kDa subunit family. In terms of assembly, NDH-1 is composed of 13 different subunits. Subunits NuoB, CD, E, F, and G constitute the peripheral sector of the complex.

It localises to the cell inner membrane. It carries out the reaction a quinone + NADH + 5 H(+)(in) = a quinol + NAD(+) + 4 H(+)(out). Functionally, NDH-1 shuttles electrons from NADH, via FMN and iron-sulfur (Fe-S) centers, to quinones in the respiratory chain. The immediate electron acceptor for the enzyme in this species is believed to be ubiquinone. Couples the redox reaction to proton translocation (for every two electrons transferred, four hydrogen ions are translocated across the cytoplasmic membrane), and thus conserves the redox energy in a proton gradient. The chain is NADH-quinone oxidoreductase subunit C/D from Pseudomonas fluorescens (strain Pf0-1).